The primary structure comprises 695 residues: Probable pre-mRNA-splicing factor ATP-dependent RNA helicase DEAH9 (695 aa).

A Helicase ATP-binding domain is found at 58–223 (LYLVENHATT…FNSSKKRHAP (166 aa)). 71-78 (GETGSGKT) is an ATP binding site. Positions 170-173 (DEAH) match the DEAH box motif. The Helicase C-terminal domain occupies 261–438 (SVVSTILLIN…STVIQLKALG (178 aa)).

This sequence belongs to the DEAD box helicase family. DEAH subfamily. DDX35 sub-subfamily.

It catalyses the reaction ATP + H2O = ADP + phosphate + H(+). In terms of biological role, may be involved in pre-mRNA splicing. The protein is Probable pre-mRNA-splicing factor ATP-dependent RNA helicase DEAH9 of Arabidopsis thaliana (Mouse-ear cress).